We begin with the raw amino-acid sequence, 479 residues long: Adenosylhomocysteinase (479 aa).

3 residues coordinate substrate: T65, D145, and E205. NAD(+) is bound at residue 206–208 (TTT). Substrate contacts are provided by K235 and D239. Residues N240, 269-274 (GYGDVG), E292, N327, 348-350 (IGH), and N393 contribute to the NAD(+) site.

The protein belongs to the adenosylhomocysteinase family. Requires NAD(+) as cofactor.

It is found in the cytoplasm. The catalysed reaction is S-adenosyl-L-homocysteine + H2O = L-homocysteine + adenosine. The protein operates within amino-acid biosynthesis; L-homocysteine biosynthesis; L-homocysteine from S-adenosyl-L-homocysteine: step 1/1. Functionally, may play a key role in the regulation of the intracellular concentration of adenosylhomocysteine. The polypeptide is Adenosylhomocysteinase (Herminiimonas arsenicoxydans).